The sequence spans 630 residues: Replication protein A 70 kDa DNA-binding subunit B (630 aa).

The OB DNA-binding region spans 200 to 282 (IIKVRVTSKG…KTVHNDYEMT (83 aa)). The segment at 496-516 (CKTCNKKVTEAIGSGYWCEGC) adopts a C4-type zinc-finger fold.

It belongs to the replication factor A protein 1 family. Heterotrimer of RPA1, RPA2 and RPA3 (canonical replication protein A complex). Interacts with RPA2A. In terms of tissue distribution, expressed in root tips, roots, shoot apical meristem (SAM) and young leaves, and at lower levels in mature leaves, flag leaves and ears.

It is found in the nucleus. In terms of biological role, component of the replication protein A complex (RPA) required for DNA recombination, repair and replication. The activity of RPA is mediated by single-stranded DNA binding and protein interactions. Probably involved in repair of double-strand DNA breaks (DSBs) induced by genotoxic stresses. This chain is Replication protein A 70 kDa DNA-binding subunit B (RPA1B), found in Oryza sativa subsp. japonica (Rice).